Reading from the N-terminus, the 416-residue chain is UDP-N-acetylglucosamine 1-carboxyvinyltransferase (416 aa).

Residue 22–23 (KN) participates in phosphoenolpyruvate binding. Arg92 lines the UDP-N-acetyl-alpha-D-glucosamine pocket. Cys116 functions as the Proton donor in the catalytic mechanism. Residue Cys116 is modified to 2-(S-cysteinyl)pyruvic acid O-phosphothioketal. Residues 121-125 (RPVDQ), Asp304, and Ile326 contribute to the UDP-N-acetyl-alpha-D-glucosamine site.

Belongs to the EPSP synthase family. MurA subfamily.

It localises to the cytoplasm. The catalysed reaction is phosphoenolpyruvate + UDP-N-acetyl-alpha-D-glucosamine = UDP-N-acetyl-3-O-(1-carboxyvinyl)-alpha-D-glucosamine + phosphate. The protein operates within cell wall biogenesis; peptidoglycan biosynthesis. In terms of biological role, cell wall formation. Adds enolpyruvyl to UDP-N-acetylglucosamine. In Aromatoleum aromaticum (strain DSM 19018 / LMG 30748 / EbN1) (Azoarcus sp. (strain EbN1)), this protein is UDP-N-acetylglucosamine 1-carboxyvinyltransferase.